The primary structure comprises 193 residues: MAEILIATERNEKGKTARKKGFIPGIIYGKDREGQSINFERGKLIAFLKEKGEKSKMNFQLNGENKQGIIKEVGRDAVTSSIIHIDIQEVSALEKVRWTIPIFFEGREQLKKKELYIQVYLTEVEVEGKASDIPNNITLNVGNLELGEEVKVKDLNIGSNIRIFNELENTIAIISSSQNTNKNIEEEDPSEVE.

Belongs to the bacterial ribosomal protein bL25 family. CTC subfamily. As to quaternary structure, part of the 50S ribosomal subunit; part of the 5S rRNA/L5/L18/L25 subcomplex. Contacts the 5S rRNA. Binds to the 5S rRNA independently of L5 and L18.

Its function is as follows. This is one of the proteins that binds to the 5S RNA in the ribosome where it forms part of the central protuberance. The protein is Large ribosomal subunit protein bL25 of Clostridium tetani (strain Massachusetts / E88).